The sequence spans 410 residues: Chitin deacetylase 3 (410 aa).

The N-terminal stretch at 1–18 (MYGHLSLSTLSLLAVVAA) is a signal peptide. The propeptide occupies 19 to 39 (APFHESWLQPRDSDVSQLFRR). N-linked (GlcNAc...) asparagine glycosylation is found at asparagine 61 and asparagine 80. The region spanning 124–314 (KVWALSFDDG…KAVANGWSVK (191 aa)) is the NodB homology domain. The active-site Proton acceptor is the aspartate 131. Position 131 (aspartate 131) interacts with acetate. A Co(2+)-binding site is contributed by aspartate 132. Asparagine 149 carries an N-linked (GlcNAc...) asparagine glycan. The Co(2+) site is built by histidine 183 and histidine 187. Tyrosine 225 provides a ligand contact to acetate. A glycan (N-linked (GlcNAc...) asparagine) is linked at asparagine 279. Catalysis depends on histidine 289, which acts as the Proton donor. The N-linked (GlcNAc...) asparagine glycan is linked to asparagine 293. Serine 385 carries the GPI-anchor amidated serine lipid modification. The propeptide at 386-410 (SSWPIANRPSLFVIACGLALAAIMV) is removed in mature form.

It belongs to the polysaccharide deacetylase family. Co(2+) serves as cofactor.

The protein localises to the cell membrane. It catalyses the reaction [(1-&gt;4)-N-acetyl-beta-D-glucosaminyl](n) + n H2O = chitosan + n acetate. In terms of biological role, hydrolyzes the N-acetamido groups of N-acetyl-D-glucosamine residues in chitin to form chitosan and acetate. Chitosan is required to anchor melanin to the cell wall, for maintenance of cell wall integrity, and for proper cytokinesis. Chitosan offers an advantage during infection as it is less readily detected than chitin by host immunosurveillance mechanisms. The chain is Chitin deacetylase 3 from Cryptococcus neoformans var. neoformans serotype D (strain B-3501A) (Filobasidiella neoformans).